A 77-amino-acid chain; its full sequence is Sec-independent protein translocase protein TatA (77 aa).

Residues 3–23 (VFGIGLPELIVILVVALLIFG) traverse the membrane as a helical segment. A disordered region spans residues 56-77 (TAALEEEQQAKAEAESPREISP). Positions 63-77 (QQAKAEAESPREISP) are enriched in basic and acidic residues.

This sequence belongs to the TatA/E family. In terms of assembly, forms a complex with TatC.

It localises to the cell inner membrane. Part of the twin-arginine translocation (Tat) system that transports large folded proteins containing a characteristic twin-arginine motif in their signal peptide across membranes. TatA could form the protein-conducting channel of the Tat system. The chain is Sec-independent protein translocase protein TatA from Thermosynechococcus vestitus (strain NIES-2133 / IAM M-273 / BP-1).